The sequence spans 156 residues: ATP synthase subunit b (156 aa).

Residues 7 to 27 (LIGQLIAFAIFVWFCMKYVWP) traverse the membrane as a helical segment.

The protein belongs to the ATPase B chain family. F-type ATPases have 2 components, F(1) - the catalytic core - and F(0) - the membrane proton channel. F(1) has five subunits: alpha(3), beta(3), gamma(1), delta(1), epsilon(1). F(0) has three main subunits: a(1), b(2) and c(10-14). The alpha and beta chains form an alternating ring which encloses part of the gamma chain. F(1) is attached to F(0) by a central stalk formed by the gamma and epsilon chains, while a peripheral stalk is formed by the delta and b chains.

It localises to the cell inner membrane. Functionally, f(1)F(0) ATP synthase produces ATP from ADP in the presence of a proton or sodium gradient. F-type ATPases consist of two structural domains, F(1) containing the extramembraneous catalytic core and F(0) containing the membrane proton channel, linked together by a central stalk and a peripheral stalk. During catalysis, ATP synthesis in the catalytic domain of F(1) is coupled via a rotary mechanism of the central stalk subunits to proton translocation. In terms of biological role, component of the F(0) channel, it forms part of the peripheral stalk, linking F(1) to F(0). The polypeptide is ATP synthase subunit b (Histophilus somni (strain 129Pt) (Haemophilus somnus)).